Reading from the N-terminus, the 264-residue chain is Glutamate racemase (264 aa).

Residues 10-11 (DS) and 42-43 (YG) contribute to the substrate site. Cys73 serves as the catalytic Proton donor/acceptor. 74–75 (NT) lines the substrate pocket. The Proton donor/acceptor role is filled by Cys181. 182–183 (TH) is a binding site for substrate.

The protein belongs to the aspartate/glutamate racemases family.

It carries out the reaction L-glutamate = D-glutamate. The protein operates within cell wall biogenesis; peptidoglycan biosynthesis. Its function is as follows. Provides the (R)-glutamate required for cell wall biosynthesis. In Thermoanaerobacter pseudethanolicus (strain ATCC 33223 / 39E) (Clostridium thermohydrosulfuricum), this protein is Glutamate racemase.